Here is a 127-residue protein sequence, read N- to C-terminus: Holotricin-2 (127 aa).

A signal peptide spans 1 to 15; sequence MMKLVIALCLIGISA. Positions 16 to 55 are excised as a propeptide; that stretch reads AYVVPVYYEIYPEDATFDEADIEPQLSPAELHHGSIRERR. The segment at 43–84 is disordered; it reads PAELHHGSIRERRSLQPGAPSFPMPGSQLPTSVSGNVEKQGR. Residues 45–56 show a composition bias toward basic and acidic residues; sequence ELHHGSIRERRS. Residues 70-84 are compositionally biased toward polar residues; the sequence is QLPTSVSGNVEKQGR.

The protein belongs to the coleoptericin family. In terms of tissue distribution, hemolymph.

It localises to the secreted. Functionally, antibacterial activity against Gram-negative bacteria but not against Gram-positive bacteria. This is Holotricin-2 from Holotrichia diomphalia (Korean black chafer).